A 103-amino-acid chain; its full sequence is Protein SUP-1 (103 aa).

Residues 1–16 form the signal peptide; that stretch reads MMSYIALAACIGLAMA. Over 17-75 the chain is Extracellular; it reads ANVDHDVKSAVNEVTTTKDGDTYCPVPLVGTKCGTSSIFHYWKCCGELNKECCFNLQTW. Residues 76–96 traverse the membrane as a helical segment; it reads VWVTLALFGVIFIASFVISLV. At 97-103 the chain is on the cytoplasmic side; sequence RCICCRK.

In terms of tissue distribution, expressed in a subset of neurons and in body wall muscles. In the nervous system, expressed specifically in cholinergic motor neurons of the ventral nerve cord, a subset of cholinergic head neurons, anterior sublateral neurons, and body sublateral neurons (at protein level).

It localises to the cell membrane. Its subcellular location is the perikaryon. It is found in the cell projection. The protein resides in the synapse. The protein localises to the cytoplasmic vesicle. It localises to the secretory vesicle. Its subcellular location is the synaptic vesicle. Functionally, may be involved in trafficking or stabilization of the vesicular acetylcholine transporter unc-17. The sequence is that of Protein SUP-1 from Caenorhabditis elegans.